Here is a 556-residue protein sequence, read N- to C-terminus: Formate--tetrahydrofolate ligase (556 aa).

Residue 65-72 coordinates ATP; it reads TPAGEGKS.

The protein belongs to the formate--tetrahydrofolate ligase family.

The enzyme catalyses (6S)-5,6,7,8-tetrahydrofolate + formate + ATP = (6R)-10-formyltetrahydrofolate + ADP + phosphate. It participates in one-carbon metabolism; tetrahydrofolate interconversion. This chain is Formate--tetrahydrofolate ligase, found in Streptococcus pneumoniae (strain 70585).